The sequence spans 330 residues: Serine/threonine-protein phosphatase beta isoform (330 aa).

Mn(2+) contacts are provided by Asp-63, His-65, Asp-91, and Asn-123. Residue His-124 is the Proton donor of the active site. Residues His-172 and His-247 each contribute to the Mn(2+) site. Residues 308–319 show a composition bias toward polar residues; the sequence is GMNSSRPTTPQR. The interval 308 to 330 is disordered; that stretch reads GMNSSRPTTPQRSAPMLATNKKK. Residues Thr-315 and Thr-316 each carry the phosphothreonine modification.

It belongs to the PPP phosphatase family. PP-1 subfamily. Interacts with Nop17l. Interacts with uri; uri inhibits flw phosphatase activity. Requires Mn(2+) as cofactor.

The enzyme catalyses O-phospho-L-seryl-[protein] + H2O = L-seryl-[protein] + phosphate. The catalysed reaction is O-phospho-L-threonyl-[protein] + H2O = L-threonyl-[protein] + phosphate. Required for cell adhesion in non-muscle tissues and in maintenance of muscle attachment. Vital for larval development. In Drosophila melanogaster (Fruit fly), this protein is Serine/threonine-protein phosphatase beta isoform (flw).